The chain runs to 587 residues: Cyclic GMP-AMP synthase-like receptor (587 aa).

Disordered regions lie at residues 26 to 48 (IHPS…RRDD) and 77 to 229 (TRMH…DRPL). Composition is skewed to basic and acidic residues over residues 95–138 (TRDR…RDSL), 150–185 (DGAR…RESL), and 204–228 (PESR…HDRP). Positions 307, 309, and 409 each coordinate Mg(2+).

Belongs to the mab-21 family. The cofactor is Mg(2+). Mn(2+) serves as cofactor.

The enzyme catalyses UTP + ATP = 2',3'-cUAMP + 2 diphosphate. Nucleotidyltransferase that catalyzes the formation of cyclic UMP-AMP (2',3'-cUAMP) from ATP and UTP and plays a key role in innate immunity. Acts as a key sensor of double-stranded DNA (dsDNA), the presence of dsDNA in the cytoplasm being a danger signal that triggers the immune responses. Directly binds dsDNA, activating the nucleotidyltransferase activity, leading to synthesis of 2',3'-cUAMP, a second messenger that binds to and activates Sting, thereby triggering the immune response via activation of the NF-kappa-B transcription factor. The chain is Cyclic GMP-AMP synthase-like receptor from Magallana gigas (Pacific oyster).